An 823-amino-acid polypeptide reads, in one-letter code: MAASEAAAAAGSAALAAGARAVPAATTGAAAAASGPWVPPGPRLRGSRPRPAGATQQPAVPAPPAGELIQPSVSELSRAVRTNILCTVRGCGKILPNSPALNMHLVKSHRLQDGIVNPTIRKDLKTGPKFYCCPIEGCPRGPERPFSQFSLVKQHFMKMHAEKKHKCSKCSNSYGTEWDLKRHAEDCGKTFRCTCGCPYASRTALQSHIYRTGHEIPAEHRDPPSKKRKMENCAQNQKLSNKTIESLNNQPIPRPDTQELEASEIKLEPSFEDSCGSNTDKQTLTTPPRYPQKLLLPKPKVALVKLPVMQFSVMPVFVPTADSSAQPVVLGVDQGSATGAVHLMPLSVGTLILGLDSEACSLKESLPLFKIANPIAGEPISTGVQVNFGKSPSNPLQELGNTCQKNSISSINVQTDLSYASQNFIPSAQWATADSSVSSCSQTDLSFDSQVSLPISVHTQTFLPSSKVTSSIAAQTDAFMDTCFQSGGVSRETQTSGIESPTDDHVQMDQAGMCGDIFESVHSSYNVATGNIISNSLVAETVTHSLLPQNEPKTLNQDIEKSAPIINFSAQNSMLPSQNMTDNQTQTIDLLSDLENILSSNLPAQTLDHRSLLSDTNPGPDTQLPSGPAQNPGIDFDIEEFFSASNIQTQTEESELSTMTTEPVLESLDIETQTDFLLADTSAQSYGCRGNSNFLGLEMFDTQTQTDLNFFLDSSPHLPLGSILKHSSFSVSTDSSDTETQTEGVSTAKNIPALESKVQLNSTETQTMSSGFETLGSLFFTSNETQTAMDDFLLADLAWNTMESQFSSVETQTSAEPHTVSNF.

The tract at residues 28–67 is disordered; it reads GAAAAASGPWVPPGPRLRGSRPRPAGATQQPAVPAPPAGE. Positions 49-59 are enriched in low complexity; that stretch reads PRPAGATQQPA. The C2H2-type 1 zinc finger occupies 84–109; that stretch reads ILCTVRGCGKILPNSPALNMHLVKSH. A C2H2-type 2; degenerate zinc finger spans residues 165-184; that stretch reads HKCSKCSNSYGTEWDLKRHA. Residues 214–225 show a composition bias toward basic and acidic residues; that stretch reads HEIPAEHRDPPS. Disordered regions lie at residues 214 to 234, 268 to 289, and 610 to 634; these read HEIPAEHRDPPSKKRKMENCA, EPSFEDSCGSNTDKQTLTTPPR, and RSLLSDTNPGPDTQLPSGPAQNPGI. Residues 223-442 are required for formation of RAD51 foci; that stretch reads PPSKKRKMEN…ADSSVSSCSQ (220 aa). 2 stretches are compositionally biased toward polar residues: residues 275-286 and 613-629; these read CGSNTDKQTLTT and LSDTNPGPDTQLPSGPA.

As to quaternary structure, interacts via its C-terminus with ATM. Interacts with DYNLL1; this interaction inhibits ATMIN transcriptional activity and hence may play a role in a feedback loop whereby DYNLL1 inhibits transactivation of its own promoter by ATMIN. As to expression, ubiquitously expressed in normal tissues and cancer cell lines with highest levels in placenta and skeletal muscle.

It is found in the nucleus. Functionally, transcription factor. Plays a crucial role in cell survival and RAD51 foci formation in response to methylating DNA damage. Involved in regulating the activity of ATM in the absence of DNA damage. May play a role in stabilizing ATM. Binds to the DYNLL1 promoter and activates its transcription. In Homo sapiens (Human), this protein is ATM interactor (ATMIN).